The chain runs to 253 residues: Neurotrophin-3 (253 aa).

The N-terminal stretch at 1 to 18 is a signal peptide; that stretch reads MSILFYVMFLAYLRGVQG. Positions 19–134 are excised as a propeptide; it reads NSMDQRSLPE…AANRTSRRKR (116 aa). Positions 62-89 are disordered; that stretch reads TLPKAEAPPREPAKSEFQPVTAMGPELL. Residue N127 is glycosylated (N-linked (GlcNAc...) asparagine). 3 disulfide bridges follow: C148-C213, C191-C242, and C201-C244.

The protein belongs to the NGF-beta family.

It localises to the secreted. Seems to promote the survival of visceral and proprioceptive sensory neurons. This chain is Neurotrophin-3 (NTF3), found in Bos taurus (Bovine).